A 346-amino-acid chain; its full sequence is Prepilin peptidase EppA (346 aa).

Transmembrane regions (helical) follow at residues 1-21 (MFGFDNLILGVYLFNFLLILT), 31-51 (IIPHFVIILMLIVNLPIGYYF), 56-76 (AITSFFATLILCLILGVGMGG), 77-97 (GDVKMFTALSPLFAAETIYFV), 101-121 (ISILIGLSALFAAIFPMTKIL), 128-148 (IIPSSAYLAMLIGIIVSITEI), 149-169 (YSIGNTKTILWSYIILSIFIS), 182-202 (LGYITPIYLIGFYLLNPAYFV), 206-226 (VLISFFVYIGQLSLISLVIYA), and 321-341 (PFVPFVLVAYCVITLLNMGVI).

It belongs to the peptidase A24 family.

Its subcellular location is the cell membrane. Its function is as follows. Peptidase that processes the N-terminus of prepilins. Specifically cleaves proteins with a class III (type IV pilin-like) signal sequence, such as the major structural pilin EpdE and the minor pilins EpdA, EpdC and EpdD. Is not able to cleave the preflagellin subunit FlaB2. The chain is Prepilin peptidase EppA from Methanococcus maripaludis (strain DSM 14266 / JCM 13030 / NBRC 101832 / S2 / LL).